A 441-amino-acid chain; its full sequence is ATP-dependent RNA helicase SUB2-1 (441 aa).

Residues 1–19 (MSHEGEEDLLEYSDNEQDI) are compositionally biased toward acidic residues. A disordered region spans residues 1 to 46 (MSHEGEEDLLEYSDNEQDIQVDASKAAEPSELDATTAEDASNGDAE). A Q motif motif is present at residues 57-85 (TGFKDFLLKPELARAIIDCGFEHPSEVQQ). The Helicase ATP-binding domain maps to 88–263 (IPQSIHGTDV…RRFLQNPLEI (176 aa)). Position 101–108 (101–108 (AKSGLGKT)) interacts with ATP. A DECD box motif is present at residues 210–213 (DECD). Residues 291 to 436 (KLAQLLDDLE…EFPEEGIDPS (146 aa)) enclose the Helicase C-terminal domain.

The protein belongs to the DEAD box helicase family. DECD subfamily.

It localises to the nucleus. The enzyme catalyses ATP + H2O = ADP + phosphate + H(+). Its function is as follows. ATP-binding RNA helicase involved in transcription elongation and required for the export of mRNA out of the nucleus. SUB2 also plays a role in pre-mRNA splicing and spliceosome assembly. May be involved in rDNA and telomeric silencing, and maintenance of genome integrity. The polypeptide is ATP-dependent RNA helicase SUB2-1 (SUB2-1) (Vanderwaltozyma polyspora (strain ATCC 22028 / DSM 70294 / BCRC 21397 / CBS 2163 / NBRC 10782 / NRRL Y-8283 / UCD 57-17) (Kluyveromyces polysporus)).